The following is a 137-amino-acid chain: Small ribosomal subunit protein bS6 (137 aa).

The segment at 104-137 (SLVNKANNKPEPKPTKAKKEDVAPEAKEQAQTEA) is disordered. Residues 111–137 (NKPEPKPTKAKKEDVAPEAKEQAQTEA) are compositionally biased toward basic and acidic residues.

Belongs to the bacterial ribosomal protein bS6 family.

Functionally, binds together with bS18 to 16S ribosomal RNA. This chain is Small ribosomal subunit protein bS6, found in Helicobacter hepaticus (strain ATCC 51449 / 3B1).